The following is a 431-amino-acid chain: Enolase (431 aa).

Glutamine 163 is a binding site for (2R)-2-phosphoglycerate. Glutamate 205 acts as the Proton donor in catalysis. Mg(2+) contacts are provided by aspartate 242, glutamate 283, and aspartate 310. Positions 335, 364, 365, and 386 each coordinate (2R)-2-phosphoglycerate. Lysine 335 serves as the catalytic Proton acceptor.

It belongs to the enolase family. Mg(2+) serves as cofactor.

Its subcellular location is the cytoplasm. The protein localises to the secreted. It localises to the cell surface. It catalyses the reaction (2R)-2-phosphoglycerate = phosphoenolpyruvate + H2O. Its pathway is carbohydrate degradation; glycolysis; pyruvate from D-glyceraldehyde 3-phosphate: step 4/5. In terms of biological role, catalyzes the reversible conversion of 2-phosphoglycerate (2-PG) into phosphoenolpyruvate (PEP). It is essential for the degradation of carbohydrates via glycolysis. The protein is Enolase of Kineococcus radiotolerans (strain ATCC BAA-149 / DSM 14245 / SRS30216).